A 72-amino-acid polypeptide reads, in one-letter code: RTCYKTPSVKPETCPHGENICYTETWCDAWCSQRGKREELGCAATCPKVKAGVGIKCCSTDNCDPFPVKNPR.

Cystine bridges form between Cys3–Cys21, Cys14–Cys42, Cys27–Cys31, Cys46–Cys57, and Cys58–Cys63.

The protein belongs to the three-finger toxin family. Long-chain subfamily. Type II alpha-neurotoxin sub-subfamily. Neurotoxin 4.7.3 differs from 4.9.3 only in that Trp-26 has undergone partial photooxidation. Expressed by the venom gland.

The protein localises to the secreted. Functionally, binds with high affinity to muscular (alpha-1/CHRNA1) and neuronal (alpha-7/CHRNA7) nicotinic acetylcholine receptor (nAChR) and inhibits acetylcholine from binding to the receptor, thereby impairing neuromuscular and neuronal transmission. This is Alpha-elapitoxin-Dv2b from Dendroaspis viridis (Western green mamba).